The sequence spans 815 residues: RNA-binding protein 5 (815 aa).

Residues 1-93 (MGSDKRVSRT…EHDYRHDISD (93 aa)) are disordered. A phosphoserine mark is found at S18, S59, S69, S72, and S78. One can recognise an RRM 1 domain in the interval 98 to 178 (KTIMLRGLPI…KHIAMHYSNP (81 aa)). A RanBP2-type zinc finger spans residues 181-210 (KFEDWLCNKCCLNNFRKRLKCFRCGADKFD). One can recognise an RRM 2 domain in the interval 231-315 (DTIILRNIAP…KTIGVDFAKS (85 aa)). Residues 321-809 (VLSDGNRVSA…KDAVRKAMFA (489 aa)) are required for interaction with U2AF2. Residues 411-422 (QSPQLYNQTSNP) show a composition bias toward polar residues. Disordered regions lie at residues 411–468 (QSPQ…DESS) and 507–540 (PAAE…AQQI). Low complexity predominate over residues 426 to 446 (PTEEAQPSTSTSTQAPAASPT). S444 carries the post-translational modification Phosphoserine. A sufficient for interaction with ACIN1, PRPF8, SFRS3, SNRPB, SNRPN, SNRNP70 and SNRNP200 region spans residues 452–535 (TKYAVPDTST…KEKKEKPKSK (84 aa)). S621 and S624 each carry phosphoserine. The segment at 647–677 (MACLLCRRQFPNKDALVRHQQLSDLHKQNMD) adopts a C2H2-type; atypical zinc-finger fold. Positions 743-789 (HSNIGNKMLQAMGWREGSGLGRKCQGITAPIEAQVRLKGAGLGAKGS) constitute a G-patch domain.

This sequence belongs to the RBM5/RBM10 family. As to quaternary structure, component of the spliceosome A complex (also known as the prespliceosome). Appears to dissociate from the spliceosome upon formation of the spliceosome B complex (also known as the precatalytic spliceosome), in which the heterotrimeric U4/U6.U5 snRNPs are bound. Interacts with U2AF2; this interaction is direct. Also interacts with ACIN1, PRPF8, SFRS3, SNRPB, SNRPN, SNRNP70 and SNRNP200; these interactions may be indirect. Isoform 5 is widely expressed in normal tissues and is expressed at increased levels in T-leukemic cell lines.

The protein localises to the nucleus. Component of the spliceosome A complex. Binds to ssRNA containing the consensus sequence 5'-AGGUAA-3'. Regulates alternative splicing of a number of mRNAs. May modulate splice site pairing after recruitment of the U1 and U2 snRNPs to the 5' and 3' splice sites of the intron. May both positively and negatively regulate apoptosis by regulating the alternative splicing of several genes involved in this process, including FAS and CASP2/caspase-2. In the case of FAS, promotes exclusion of exon 6 thereby producing a soluble form of FAS that inhibits apoptosis. In the case of CASP2/caspase-2, promotes exclusion of exon 9 thereby producing a catalytically active form of CASP2/Caspase-2 that induces apoptosis. The chain is RNA-binding protein 5 (RBM5) from Homo sapiens (Human).